We begin with the raw amino-acid sequence, 576 residues long: Catalase-peroxidase (576 aa).

The tryptophyl-tyrosyl-methioninium (Trp-Tyr) (with M-250) cross-link spans 95–224 (WHAAGSYRAA…LAAVQMGLIY (130 aa)). The active-site Proton acceptor is histidine 96. A cross-link (tryptophyl-tyrosyl-methioninium (Tyr-Met) (with W-95)) is located at residues 224–250 (YVNPEGVNGQPDPARTALHIRETFARM). Residue histidine 265 coordinates heme b.

The protein belongs to the peroxidase family. Peroxidase/catalase subfamily. In terms of assembly, homotetramer. The cofactor is heme b. In terms of processing, formation of the three residue Trp-Tyr-Met cross-link is important for the catalase, but not the peroxidase activity of the enzyme.

It catalyses the reaction H2O2 + AH2 = A + 2 H2O. The enzyme catalyses 2 H2O2 = O2 + 2 H2O. Bifunctional enzyme with both catalase and broad-spectrum peroxidase activity. Also displays NADH oxidase, INH lyase and isonicotinoyl-NAD synthase activities. Important for stationary phase survival. The chain is Catalase-peroxidase (katG) from Rhodobacter capsulatus (Rhodopseudomonas capsulata).